The primary structure comprises 455 residues: Ammonium transporter Rh type B (455 aa).

Residues 1 to 10 (MARIPRHRRL) lie on the Cytoplasmic side of the membrane. A helical membrane pass occupies residues 11-31 (VLPLLCLLFQGATSLLFAIFV). Topologically, residues 32-58 (RYNHETDAALWHWGNHSNVDNEFYFRY) are extracellular. The N-linked (GlcNAc...) asparagine glycan is linked to Asn-46. Residues 59–79 (PSFQDVHVMVFVGFGFLMVFL) form a helical membrane-spanning segment. Topologically, residues 80-83 (QRYG) are cytoplasmic. The helical transmembrane segment at 84-104 (FSSVGFTFLVATFTLQWATLL) threads the bilayer. Residues 105-121 (QGFLHSFHGGHIHIGVE) lie on the Extracellular side of the membrane. A helical membrane pass occupies residues 122–142 (SLINADFCAGAVLISFGAVLG). Residues 143-148 (KTGPAQ) lie on the Cytoplasmic side of the membrane. The helical transmembrane segment at 149-169 (LLLMALLEAVLFSVNEFILLS) threads the bilayer. Residues 170–176 (LLGVRDA) lie on the Extracellular side of the membrane. The chain crosses the membrane as a helical span at residues 177 to 197 (GGSMTIHTFGAYFGLFLSRVL). At 198 to 216 (YRSQLEKSRHRQTSVYNSD) the chain is on the cytoplasmic side. A helical transmembrane segment spans residues 217–237 (LFAMIGTIFLWVFWPSFNSAP). The Extracellular portion of the chain corresponds to 238–247 (TALGDGQHRT). A helical transmembrane segment spans residues 248–270 (VVNTYYSLTASTLSTFALSALVS). Topologically, residues 271 to 274 (GDGR) are cytoplasmic. Residues 275 to 295 (LDMVHIQNAALAGGVVVGTAS) traverse the membrane as a helical segment. Residue Glu-296 is a topological domain, extracellular. A helical membrane pass occupies residues 297 to 317 (MMLTPFGALAAGFLAGTVSTL). The Cytoplasmic segment spans residues 318 to 340 (GYKFFTPILESRFKLQDTCGVHN). Residues 341–361 (LHGMPGLLGAILGVLVAALAT) form a helical membrane-spanning segment. At 362–390 (HEAYGDGLQTVFPLIAKGQRSATSQAMYQ) the chain is on the extracellular side. Residues 391-411 (LFGMFVTLVFASVGGSLGGLL) traverse the membrane as a helical segment. Over 412 to 455 (LKLPFLDSPPDSQCFEDQVYWEVPGEQEAETQRPLRTEEPDTQA) the chain is Cytoplasmic. The interval 413 to 421 (KLPFLDSPP) is interaction with ANK3.

Belongs to the ammonium transporter (TC 2.A.49) family. Rh subfamily. In terms of assembly, interacts (via C-terminus) with ANK2 and ANK3; required for targeting to the basolateral membrane. N-glycosylated. In terms of tissue distribution, expressed in kidney by connecting segments and collecting tubules (at protein level).

It is found in the basolateral cell membrane. The protein resides in the cytoplasmic vesicle membrane. It carries out the reaction NH4(+)(in) = NH4(+)(out). The catalysed reaction is methylamine(out) = methylamine(in). It catalyses the reaction CO2(out) = CO2(in). In terms of biological role, ammonium transporter involved in the maintenance of acid-base homeostasis. Transports ammonium and its related derivative methylammonium across the basolateral plasma membrane of epithelial cells likely contributing to renal transepithelial ammonia transport and ammonia metabolism. May transport either NH4(+) or NH3 ammonia species predominantly mediating an electrogenic NH4(+) transport. May act as a CO2 channel providing for renal acid secretion. In Rattus norvegicus (Rat), this protein is Ammonium transporter Rh type B (Rhbg).